Consider the following 472-residue polypeptide: tRNA-2-methylthio-N(6)-dimethylallyladenosine synthase (472 aa).

An MTTase N-terminal domain is found at 22–138 (RSYWITTFGC…LETLLQQVDS (117 aa)). [4Fe-4S] cluster contacts are provided by cysteine 31, cysteine 67, cysteine 101, cysteine 173, cysteine 177, and cysteine 180. Positions 159-396 (RDSAICGWVN…NALVERNARE (238 aa)) constitute a Radical SAM core domain. The 69-residue stretch at 399–467 (IRYQGRTEEV…SFSLSGTPLP (69 aa)) folds into the TRAM domain.

This sequence belongs to the methylthiotransferase family. MiaB subfamily. Monomer. Requires [4Fe-4S] cluster as cofactor.

The protein localises to the cytoplasm. The catalysed reaction is N(6)-dimethylallyladenosine(37) in tRNA + (sulfur carrier)-SH + AH2 + 2 S-adenosyl-L-methionine = 2-methylsulfanyl-N(6)-dimethylallyladenosine(37) in tRNA + (sulfur carrier)-H + 5'-deoxyadenosine + L-methionine + A + S-adenosyl-L-homocysteine + 2 H(+). Its function is as follows. Catalyzes the methylthiolation of N6-(dimethylallyl)adenosine (i(6)A), leading to the formation of 2-methylthio-N6-(dimethylallyl)adenosine (ms(2)i(6)A) at position 37 in tRNAs that read codons beginning with uridine. This chain is tRNA-2-methylthio-N(6)-dimethylallyladenosine synthase, found in Synechococcus sp. (strain CC9902).